Consider the following 90-residue polypeptide: MSQRKIQKVMVQPVNLIFRYLQNRTRVQIWLYEDVTHRLEGYIIGFDEFMNVVFDEAEEVNMKTKGRNKIGRILLKGDNITLIHAAAQEA.

In terms of domain architecture, Sm spans 14–89 (VNLIFRYLQN…ITLIHAAAQE (76 aa)).

The protein belongs to the snRNP Sm proteins family. As to quaternary structure, core component of the spliceosomal U1, U2, U4 and U5 small nuclear ribonucleoproteins (snRNPs), the building blocks of the spliceosome.

It localises to the nucleus. The protein localises to the cytoplasm. Its subcellular location is the cytosol. Functionally, plays a role in pre-mRNA splicing as a core component of the spliceosomal U1, U2, U4 and U5 small nuclear ribonucleoproteins (snRNPs), the building blocks of the spliceosome. The polypeptide is Probable small nuclear ribonucleoprotein E (snr-6) (Caenorhabditis briggsae).